Here is a 141-residue protein sequence, read N- to C-terminus: MDSSACKKSHQSKKWRIQAQENFAKKFPYRLSWLTEPDPEPLQPWEVTNDSNTVQLPLQKRLVPTRSIPVRGLGAPDFTSPSGSCPAPLPAPSPPPLCNLWELKLLSRRFPRQLAFLLSTRHTEAACPQTSKAAGLSRGLS.

The protein localises to the cytoplasm. This is an uncharacterized protein from Homo sapiens (Human).